Consider the following 610-residue polypeptide: Manganese lipoxygenase (610 aa).

The N-terminal stretch at 1–16 (MVALLIFLGIFTCVET) is a signal peptide. Positions 47–610 (FTLPNEDDEI…PGVIPFYLSV (564 aa)) constitute a Lipoxygenase domain. N-linked (GlcNAc...) asparagine glycans are attached at residues N157 and N259. Positions 290 and 295 each coordinate Mn(2+). N386 is a glycosylation site (N-linked (GlcNAc...) asparagine). H475 and N479 together coordinate Mn(2+). A glycan (N-linked (GlcNAc...) asparagine) is linked at N540. V610 is a binding site for Mn(2+).

The protein belongs to the lipoxygenase family. Manganese lipoxygenase subfamily. Mn(2+) serves as cofactor. In terms of processing, N- and O-glycosylated.

The protein resides in the secreted. The enzyme catalyses (9Z,12Z)-octadecadienoate + O2 = (11S)-hydroperoxy-(9Z,12Z)-octadecadienoate. The catalysed reaction is (9Z,12Z)-octadecadienoate + O2 = (11R)-hydroperoxy-(9Z,12Z)-octadecadienoate. It carries out the reaction (9Z,12Z)-octadecadienoate + O2 = (13S)-hydroperoxy-(9Z,11E)-octadecadienoate. It catalyses the reaction (9Z,12Z,15Z)-octadecatrienoate + O2 = (11S)-hydroperoxy-(9Z,12Z,15Z)-octadecatrienoate. Functionally, lipoxygenase that metabolizes linoleic and alpha-linolenic acids to 9-, 11- and 13-hydroperoxy fatty acids. Oxidizes linoleic acid to mainly 11R-, 13S- and racemic 9-HPODE, and alpha-linolenic acid to 11-HPOTrE. This chain is Manganese lipoxygenase, found in Fusarium oxysporum (strain Fo5176) (Fusarium vascular wilt).